We begin with the raw amino-acid sequence, 664 residues long: UvrABC system protein B (664 aa).

One can recognise a Helicase ATP-binding domain in the interval 23-412; sequence EGLNRGMRFQ…VVEQIIRPTG (390 aa). 36 to 43 contacts ATP; it reads GVTGSGKT. The Beta-hairpin motif lies at 89-112; it reads YYDYYQPEAYIPTKDLYIEKNADI. One can recognise a Helicase C-terminal domain in the interval 429-588; it reads DLVNEIVKVK…ITPRSVIKPL (160 aa). The UVR domain occupies 622–657; sequence EEYMAVLEEEMYRAASELRYEDAAALRDELFRIREE.

The protein belongs to the UvrB family. In terms of assembly, forms a heterotetramer with UvrA during the search for lesions. Interacts with UvrC in an incision complex.

The protein localises to the cytoplasm. Functionally, the UvrABC repair system catalyzes the recognition and processing of DNA lesions. A damage recognition complex composed of 2 UvrA and 2 UvrB subunits scans DNA for abnormalities. Upon binding of the UvrA(2)B(2) complex to a putative damaged site, the DNA wraps around one UvrB monomer. DNA wrap is dependent on ATP binding by UvrB and probably causes local melting of the DNA helix, facilitating insertion of UvrB beta-hairpin between the DNA strands. Then UvrB probes one DNA strand for the presence of a lesion. If a lesion is found the UvrA subunits dissociate and the UvrB-DNA preincision complex is formed. This complex is subsequently bound by UvrC and the second UvrB is released. If no lesion is found, the DNA wraps around the other UvrB subunit that will check the other stand for damage. In Thermotoga maritima (strain ATCC 43589 / DSM 3109 / JCM 10099 / NBRC 100826 / MSB8), this protein is UvrABC system protein B.